A 284-amino-acid polypeptide reads, in one-letter code: Undecaprenyl-diphosphatase (284 aa).

8 helical membrane-spanning segments follow: residues 7–27 (IILG…TGHL), 44–64 (EMFD…LYFH), 90–110 (LWLK…PLND), 116–136 (FYHF…FIVI), 167–187 (VLSL…ALLV), 197–217 (FTFF…ILHF), 229–249 (FGVL…AIKF), and 259–279 (FTFF…YAMF).

It belongs to the UppP family.

It is found in the cell membrane. The catalysed reaction is di-trans,octa-cis-undecaprenyl diphosphate + H2O = di-trans,octa-cis-undecaprenyl phosphate + phosphate + H(+). Functionally, catalyzes the dephosphorylation of undecaprenyl diphosphate (UPP). Confers resistance to bacitracin. The protein is Undecaprenyl-diphosphatase of Lactococcus lactis subsp. lactis (strain IL1403) (Streptococcus lactis).